The chain runs to 488 residues: Aspartyl/glutamyl-tRNA(Asn/Gln) amidotransferase subunit B (488 aa).

Belongs to the GatB/GatE family. GatB subfamily. In terms of assembly, heterotrimer of A, B and C subunits.

The enzyme catalyses L-glutamyl-tRNA(Gln) + L-glutamine + ATP + H2O = L-glutaminyl-tRNA(Gln) + L-glutamate + ADP + phosphate + H(+). It carries out the reaction L-aspartyl-tRNA(Asn) + L-glutamine + ATP + H2O = L-asparaginyl-tRNA(Asn) + L-glutamate + ADP + phosphate + 2 H(+). Allows the formation of correctly charged Asn-tRNA(Asn) or Gln-tRNA(Gln) through the transamidation of misacylated Asp-tRNA(Asn) or Glu-tRNA(Gln) in organisms which lack either or both of asparaginyl-tRNA or glutaminyl-tRNA synthetases. The reaction takes place in the presence of glutamine and ATP through an activated phospho-Asp-tRNA(Asn) or phospho-Glu-tRNA(Gln). The polypeptide is Aspartyl/glutamyl-tRNA(Asn/Gln) amidotransferase subunit B (Ralstonia pickettii (strain 12J)).